Here is a 105-residue protein sequence, read N- to C-terminus: Large ribosomal subunit protein uL24 (105 aa).

The segment at 75–105 (DSDGNPTRVGYRTDEESGKRVRISRKNGKDI) is disordered. Over residues 94–105 (RVRISRKNGKDI) the composition is skewed to basic residues.

Belongs to the universal ribosomal protein uL24 family. As to quaternary structure, part of the 50S ribosomal subunit.

Its function is as follows. One of two assembly initiator proteins, it binds directly to the 5'-end of the 23S rRNA, where it nucleates assembly of the 50S subunit. In terms of biological role, one of the proteins that surrounds the polypeptide exit tunnel on the outside of the subunit. The sequence is that of Large ribosomal subunit protein uL24 from Rhodococcus jostii (strain RHA1).